Reading from the N-terminus, the 200-residue chain is Riboflavin synthase (200 aa).

2 Lumazine-binding repeats span residues 1–97 (MFSG…IGGH) and 98–190 (LLSG…VDTV). Residues 4–6 (GII), 48–50 (CLT), 62–67 (DVIPET), 101–103 (GHV), Lys-132, 141–143 (SLT), and 155–160 (GLIPET) contribute to the 2,4-dihydroxypteridine site.

Homotrimer.

The catalysed reaction is 2 6,7-dimethyl-8-(1-D-ribityl)lumazine + H(+) = 5-amino-6-(D-ribitylamino)uracil + riboflavin. It functions in the pathway cofactor biosynthesis; riboflavin biosynthesis; riboflavin from 2-hydroxy-3-oxobutyl phosphate and 5-amino-6-(D-ribitylamino)uracil: step 2/2. In terms of biological role, catalyzes the dismutation of two molecules of 6,7-dimethyl-8-ribityllumazine, resulting in the formation of riboflavin and 5-amino-6-(D-ribitylamino)uracil. The polypeptide is Riboflavin synthase (ribE) (Chlamydia pneumoniae (Chlamydophila pneumoniae)).